The sequence spans 247 residues: Probable transcriptional regulatory protein Asuc_1803 (247 aa).

Belongs to the TACO1 family.

The protein resides in the cytoplasm. This chain is Probable transcriptional regulatory protein Asuc_1803, found in Actinobacillus succinogenes (strain ATCC 55618 / DSM 22257 / CCUG 43843 / 130Z).